Here is a 520-residue protein sequence, read N- to C-terminus: Cholesterol side-chain cleavage enzyme, mitochondrial (520 aa).

The transit peptide at 1–39 (MLARGLPFRSALVKACPPLLNTGREGWGHHRVGTGEGAG) directs the protein to the mitochondrion. The tract at residues 27-47 (WGHHRVGTGEGAGISTRTPRP) is disordered. Cys-461 provides a ligand contact to heme.

The protein belongs to the cytochrome P450 family. Interacts with FDX1/adrenodoxin. The cofactor is heme.

It localises to the mitochondrion inner membrane. The catalysed reaction is 6 reduced [adrenodoxin] + cholesterol + 3 O2 + 6 H(+) = 4-methylpentanal + pregnenolone + 6 oxidized [adrenodoxin] + 4 H2O. The enzyme catalyses 2 reduced [adrenodoxin] + cholesterol + O2 + 2 H(+) = (22R)-hydroxycholesterol + 2 oxidized [adrenodoxin] + H2O. It catalyses the reaction (22R)-hydroxycholesterol + 2 reduced [adrenodoxin] + O2 + 2 H(+) = (20R,22R)-20,22-dihydroxycholesterol + 2 oxidized [adrenodoxin] + H2O. It carries out the reaction (20R,22R)-20,22-dihydroxycholesterol + 2 reduced [adrenodoxin] + O2 + 2 H(+) = 4-methylpentanal + pregnenolone + 2 oxidized [adrenodoxin] + 2 H2O. Its pathway is lipid metabolism; C21-steroid hormone metabolism. It participates in steroid metabolism; cholesterol metabolism. In terms of biological role, a cytochrome P450 monooxygenase that catalyzes the side-chain hydroxylation and cleavage of cholesterol to pregnenolone, the precursor of most steroid hormones. Catalyzes three sequential oxidation reactions of cholesterol, namely the hydroxylation at C22 followed with the hydroxylation at C20 to yield 20R,22R-hydroxycholesterol that is further cleaved between C20 and C22 to yield the C21-steroid pregnenolone and 4-methylpentanal. Mechanistically, uses molecular oxygen inserting one oxygen atom into a substrate and reducing the second into a water molecule. Two electrons are provided by NADPH via a two-protein mitochondrial transfer system comprising flavoprotein FDXR (adrenodoxin/ferredoxin reductase) and nonheme iron-sulfur protein FDX1 or FDX2 (adrenodoxin/ferredoxin). In Ovis aries (Sheep), this protein is Cholesterol side-chain cleavage enzyme, mitochondrial.